The primary structure comprises 234 residues: MAERGYSFSLTTFSPSGKLVQIEYALAAVAGGAPSVGIKAANGVVLATEKKQKSILYDERSVHKVEPITKHIGLVYSGMGPDYRVLVHRARKLAQQYYLVYQEPIPTAQLVQRVASVMQEYTQSGGVRPFGVSLLICGWNEGRPYLFQSDPSGAYFAWKATAMGKNYVNGKTFLEKRYNEDLELEDAIHTAILTLKESFEGQMTEDNIEVGICNEAGFRRLTPTEVKDYLAAIA.

Ala2 is subject to N-acetylalanine. Tyr6 carries the phosphotyrosine modification. 3 positions are modified to phosphoserine: Ser7, Ser14, and Ser16. Phosphotyrosine is present on Tyr24. Lys70 is subject to N6-acetyllysine. Phosphotyrosine is present on residues Tyr76 and Tyr121. Lys171 bears the N6-acetyllysine mark.

The protein belongs to the peptidase T1A family. In terms of assembly, the 26S proteasome consists of a 20S proteasome core and two 19S regulatory subunits. The 20S proteasome core is a barrel-shaped complex made of 28 subunits that are arranged in four stacked rings. The two outer rings are each formed by seven alpha subunits, and the two inner rings are formed by seven beta subunits. The proteolytic activity is exerted by three beta-subunits PSMB5, PSMB6 and PSMB7. In terms of processing, phosphorylated on tyrosine residues; which may be important for nuclear import.

The protein localises to the cytoplasm. It is found in the nucleus. In terms of biological role, component of the 20S core proteasome complex involved in the proteolytic degradation of most intracellular proteins. This complex plays numerous essential roles within the cell by associating with different regulatory particles. Associated with two 19S regulatory particles, forms the 26S proteasome and thus participates in the ATP-dependent degradation of ubiquitinated proteins. The 26S proteasome plays a key role in the maintenance of protein homeostasis by removing misfolded or damaged proteins that could impair cellular functions, and by removing proteins whose functions are no longer required. Associated with the PA200 or PA28, the 20S proteasome mediates ubiquitin-independent protein degradation. This type of proteolysis is required in several pathways including spermatogenesis (20S-PA200 complex) or generation of a subset of MHC class I-presented antigenic peptides (20S-PA28 complex). This is Proteasome subunit alpha type-2 (PSMA2) from Bos taurus (Bovine).